The sequence spans 814 residues: Leucine--tRNA ligase (814 aa).

The 'HIGH' region signature appears at 42-52 (PYPSGNLHIGH). The 'KMSKS' region motif lies at 582–586 (KMSKS). Residue K585 participates in ATP binding.

Belongs to the class-I aminoacyl-tRNA synthetase family.

Its subcellular location is the cytoplasm. The enzyme catalyses tRNA(Leu) + L-leucine + ATP = L-leucyl-tRNA(Leu) + AMP + diphosphate. The protein is Leucine--tRNA ligase of Herpetosiphon aurantiacus (strain ATCC 23779 / DSM 785 / 114-95).